The primary structure comprises 224 residues: Deoxyribose-phosphate aldolase (224 aa).

Asp-92 acts as the Proton donor/acceptor in catalysis. Lys-155 functions as the Schiff-base intermediate with acetaldehyde in the catalytic mechanism. Residue Lys-184 is the Proton donor/acceptor of the active site.

Belongs to the DeoC/FbaB aldolase family. DeoC type 1 subfamily.

It is found in the cytoplasm. The catalysed reaction is 2-deoxy-D-ribose 5-phosphate = D-glyceraldehyde 3-phosphate + acetaldehyde. It functions in the pathway carbohydrate degradation; 2-deoxy-D-ribose 1-phosphate degradation; D-glyceraldehyde 3-phosphate and acetaldehyde from 2-deoxy-alpha-D-ribose 1-phosphate: step 2/2. In terms of biological role, catalyzes a reversible aldol reaction between acetaldehyde and D-glyceraldehyde 3-phosphate to generate 2-deoxy-D-ribose 5-phosphate. The protein is Deoxyribose-phosphate aldolase of Halalkalibacterium halodurans (strain ATCC BAA-125 / DSM 18197 / FERM 7344 / JCM 9153 / C-125) (Bacillus halodurans).